The following is a 388-amino-acid chain: Ferrochelatase (388 aa).

Fe cation contacts are provided by H196 and E277.

Belongs to the ferrochelatase family.

It localises to the cytoplasm. The catalysed reaction is heme b + 2 H(+) = protoporphyrin IX + Fe(2+). It functions in the pathway porphyrin-containing compound metabolism; protoheme biosynthesis; protoheme from protoporphyrin-IX: step 1/1. Its function is as follows. Catalyzes the ferrous insertion into protoporphyrin IX. This Nostoc sp. (strain PCC 7120 / SAG 25.82 / UTEX 2576) protein is Ferrochelatase.